Consider the following 65-residue polypeptide: SCOCO-like protein 1 (65 aa).

The stretch at 8–44 (RSLMEQKAMELQQQLQALLDEIDQNKQESENISRESE) forms a coiled coil.

This sequence belongs to the SLO1 family.

The polypeptide is SCOCO-like protein 1 (Schizosaccharomyces pombe (strain 972 / ATCC 24843) (Fission yeast)).